The primary structure comprises 323 residues: MSNNNSKLEFVPNIQLKEDLGAFSYKVQLSPVEKGMAHILGNSIRRVLLSSLSGASIIKVNIANVLHEYSTLEDVKEDVVEIVSNLKKVAIKLDTGIDRLDLELSVNKSGVVSAGDFKTTQGVEIINKDQPIATLTNQRAFSLTATVSVGRNVGILSAIPTELERVGDIAVDADFNPIKRVAFEVFDNGDSETLEVFVKTNGTIEPLAAVTKALEYFCEQISVFVSLRVPSNGKTGDVLIDSNIDPILLKPIDDLELTVRSSNCLRAENIKYLGDLVQYSESQLMKIPNLGKKSLNEIKQILIDNNLSLGVQIDNFRELVEGK.

Residues 1 to 228 (MSNNNSKLEF…EQISVFVSLR (228 aa)) form an alpha N-terminal domain (alpha-NTD) region. Residues 244-323 (IDPILLKPID…DNFRELVEGK (80 aa)) are alpha C-terminal domain (alpha-CTD).

This sequence belongs to the RNA polymerase alpha chain family. Homodimer. The RNAP catalytic core consists of 2 alpha, 1 beta, 1 beta' and 1 omega subunit. When a sigma factor is associated with the core the holoenzyme is formed, which can initiate transcription.

It catalyses the reaction RNA(n) + a ribonucleoside 5'-triphosphate = RNA(n+1) + diphosphate. In terms of biological role, DNA-dependent RNA polymerase catalyzes the transcription of DNA into RNA using the four ribonucleoside triphosphates as substrates. This chain is DNA-directed RNA polymerase subunit alpha 1, found in Francisella tularensis subsp. tularensis (strain FSC 198).